A 510-amino-acid chain; its full sequence is G-protein coupled receptor dmsr-1 (510 aa).

Residues 1 to 35 (MEFTECKTTFIHLPDKSFLYDVFVSVYNFYHPIHA) lie on the Extracellular side of the membrane. The chain crosses the membrane as a helical span at residues 36–56 (YLSIFLCVLGTIANFCNIVVL). Residues 57–64 (TRRTMRTP) are Cytoplasmic-facing. Residues 65 to 85 (VNMILTAMASCDTVVLFSNLI) form a helical membrane-spanning segment. Residues 86–107 (YTTHYSFVAFKFCHPKHWSYSW) are Extracellular-facing. Residues 108–128 (ALFLIAHAHLSLVAHSSSVWL) traverse the membrane as a helical segment. At 129–155 (SVMLALVRYVTLRSRGNMGGMQVTLRH) the chain is on the cytoplasmic side. A helical transmembrane segment spans residues 156 to 176 (SYYAVAVTVSLVAVLNAPNFL). Over 177–223 (NYKINEQPLNETCTDLDPMFWNSPAYLPGIADIAKANSCLVFRLSYW) the chain is Extracellular. N186 carries N-linked (GlcNAc...) asparagine glycosylation. A helical transmembrane segment spans residues 224–244 (ISGMVFKVLPCALLSLFVWLL). Residues 245–307 (LRILREVREN…GERVDRTTHM (63 aa)) lie on the Cytoplasmic side of the membrane. The helical transmembrane segment at 308-328 (LLAIVAVMLVTELPQGIMAVL) threads the bilayer. The Extracellular segment spans residues 329 to 343 (SGMCSEEFRIYIYNN). The chain crosses the membrane as a helical span at residues 344–364 (LGDILDLFSLCGSCCSFIIYC). At 365 to 510 (SMSGQFRNEF…DGIRGHFQNI (146 aa)) the chain is on the cytoplasmic side. Residues 452 to 510 (GCDSITPCSPMPTSFPSSPLPPIRSGEDESTDETSHLLNSSGPNSTASADGIRGHFQNI) form a disordered region. Positions 487 to 499 (HLLNSSGPNSTAS) are enriched in polar residues.

This sequence belongs to the G-protein coupled receptor 1 family. As to expression, expressed in head neurons including the RID neuron and the paired AIY neurons, and in tail neurons including the paired PHA and PHB neurons. Not expressed in AVE and AVA neurons.

It localises to the cell membrane. Its function is as follows. G-protein coupled receptor. Functionally, G-protein coupled receptor for flp-13 RFamide neuropeptides in vitro. Upon activation by flp-13 RFamide neuropeptides, promotes sleep in response to cellular stress also known as stress-induced sleep (SIS), probably by inhibiting the activity of wake-promoting neurons. The sequence is that of G-protein coupled receptor dmsr-1 from Caenorhabditis elegans.